Here is a 505-residue protein sequence, read N- to C-terminus: MQKRIYVSLFFLVFFLSKISVVLSKDDGQRHGEDSDSMNKYNYIYRPNADNGIHNNLRPSSYIDMEHIAKGRDNTSGLRENELFDIQNDENSNMGPDQEKVITLSDKIYIDKIKNIIEYRKWRAKSKYRSPAKQPEEDMFVEGYIPIKRRDDNLLPHEKAEKDFEEIIQKYVDLENKLQKQKELEEAERRKKKLDDEQKRQKDLEDTNRKENDEEQSYKKLEDLELENIDTKINNNDTYDVENGFNDDNKLYTKINKIVSQVSQNNELYVNIMKYITLVYTSHVDIKQDDFTNGSISIFLTFENPKMGNDLANINISFFASEQRTGTNEVAEARSNYLTNYNMNELLEDNASGRLLSQDEYIKELVKYNHSISSSNKENLKNENYDVNMNISKILQYIIDNDINLVDNFITFNRTNEQEVTISKLDDFLHECSKVKPEDIKKDEIQKIIKTINKKEQIIKEVKNSLIKKDIEKCKLYTTILMFGSSIYSSIKYFFLLMLFVIYIL.

A signal peptide spans 1 to 24 (MQKRIYVSLFFLVFFLSKISVVLS). The interval 188-221 (ERRKKKLDDEQKRQKDLEDTNRKENDEEQSYKKL) is disordered. A helical membrane pass occupies residues 485 to 505 (SSIYSSIKYFFLLMLFVIYIL).

As to quaternary structure, monomer. May form multimers with an unknown protein(s).

It localises to the membrane. Functionally, involved in ookinete evasion of the mosquito complement-like response, oocyst maturation, sporozoite development and infectivity. The chain is Ookinete surface protein PIMMS43 from Plasmodium falciparum (isolate 3D7).